The primary structure comprises 437 residues: Probable glycine dehydrogenase (decarboxylating) subunit 1 (437 aa).

It belongs to the GcvP family. N-terminal subunit subfamily. As to quaternary structure, the glycine cleavage system is composed of four proteins: P, T, L and H. In this organism, the P 'protein' is a heterodimer of two subunits.

The enzyme catalyses N(6)-[(R)-lipoyl]-L-lysyl-[glycine-cleavage complex H protein] + glycine + H(+) = N(6)-[(R)-S(8)-aminomethyldihydrolipoyl]-L-lysyl-[glycine-cleavage complex H protein] + CO2. In terms of biological role, the glycine cleavage system catalyzes the degradation of glycine. The P protein binds the alpha-amino group of glycine through its pyridoxal phosphate cofactor; CO(2) is released and the remaining methylamine moiety is then transferred to the lipoamide cofactor of the H protein. In Thermotoga petrophila (strain ATCC BAA-488 / DSM 13995 / JCM 10881 / RKU-1), this protein is Probable glycine dehydrogenase (decarboxylating) subunit 1.